The following is a 125-amino-acid chain: Succinate dehydrogenase assembly factor 3, mitochondrial (125 aa).

Residues 1–42 constitute a mitochondrion transit peptide; it reads MRTTNHLYRTVHRQGKPLLPPLHLYRRILRAHRTFPPAQRAL.

It belongs to the complex I LYR family. SDHAF3 subfamily. In terms of assembly, interacts with the iron-sulfur protein subunit within the SDH catalytic dimer.

The protein resides in the mitochondrion matrix. Functionally, plays an essential role in the assembly of succinate dehydrogenase (SDH), an enzyme complex (also referred to as respiratory complex II) that is a component of both the tricarboxylic acid (TCA) cycle and the mitochondrial electron transport chain, and which couples the oxidation of succinate to fumarate with the reduction of ubiquinone (coenzyme Q) to ubiquinol. Promotes maturation of the iron-sulfur protein subunit of the SDH catalytic dimer, protecting it from the deleterious effects of oxidants. May act together with SDHAF1. In Eremothecium gossypii (strain ATCC 10895 / CBS 109.51 / FGSC 9923 / NRRL Y-1056) (Yeast), this protein is Succinate dehydrogenase assembly factor 3, mitochondrial.